The following is a 504-amino-acid chain: Probable chlorophyll(ide) b reductase NYC1, chloroplastic (504 aa).

The transit peptide at 1–33 (MAAAAVVHLSVHGRLRRSPELHARPYHRPSLLR) directs the protein to the chloroplast. Positions 41–63 (ADNGGEEASSSPPPPTTAEARRR) are disordered. The next 2 membrane-spanning stretches (helical) occupy residues 114–134 (YVITMMSSGVVLGVGFQLSGG) and 141–161 (LIWYSWLGGVIIGTMIGANSV). 175 to 199 (ITGSTRGLGKALAREFLLSGDRVVI) is an NAD(+) binding site. Y339 functions as the Proton acceptor in the catalytic mechanism. Residues 479–499 (WVSVFSLSVVCAFIILSSSGG) form a helical membrane-spanning segment.

This sequence belongs to the short-chain dehydrogenases/reductases (SDR) family. Interacts with NOL to form a complex that acts as a chlorophyll b reductase. Expressed in leaves and stems. Also detected in non-photosynthetic tissues such as roots.

The protein resides in the plastid. Its subcellular location is the chloroplast thylakoid membrane. The catalysed reaction is 7(1)-hydroxychlorophyllide a + NAD(+) = chlorophyllide b + NADH + H(+). The enzyme catalyses 7(1)-hydroxychlorophyllide a + NADP(+) = chlorophyllide b + NADPH + H(+). Its function is as follows. Required for proper chloroplast degradation. Involved in chlorophyll b degradation. This is Probable chlorophyll(ide) b reductase NYC1, chloroplastic (NYC1) from Oryza sativa subsp. japonica (Rice).